The primary structure comprises 214 residues: Putative ankyrin repeat protein RF_1081 (214 aa).

Over residues 1-14 the composition is skewed to polar residues; sequence MRKQQIPTLSTSAL. The tract at residues 1–32 is disordered; that stretch reads MRKQQIPTLSTSALDKSPGPGSPDSDIEMKST. One copy of the ANK repeat lies at 67-135; sequence NPNALLHEAA…EEPILVTKKD (69 aa).

The chain is Putative ankyrin repeat protein RF_1081 from Rickettsia felis (strain ATCC VR-1525 / URRWXCal2) (Rickettsia azadi).